The chain runs to 277 residues: Caspase-3 (277 aa).

At Met-1 the chain carries N-acetylmethionine. 2 consecutive propeptides follow at residues 1-9 (MENSENSVD) and 10-28 (AKSIKNSETKIFHGSKSMD). Lys-11 carries the post-translational modification N6-acetyllysine. Residue Ser-26 is modified to Phosphoserine. Active-site residues include His-121 and Cys-163. Cys-163 carries the post-translational modification S-nitrosocysteine; in inhibited form.

This sequence belongs to the peptidase C14A family. Heterotetramer that consists of two anti-parallel arranged heterodimers, each one formed by a 17 kDa (p17) and a 12 kDa (p12) subunit. Interacts with BIRC6/bruce. Cleavage by granzyme B, caspase-6, caspase-8 and caspase-10 generates the two active subunits. Additional processing of the propeptides is likely due to the autocatalytic activity of the activated protease. Active heterodimers between the small subunit of caspase-7 protease and the large subunit of caspase-3 also occur and vice versa. In terms of processing, S-nitrosylated on its catalytic site cysteine in unstimulated cell lines and denitrosylated upon activation of the Fas apoptotic pathway, associated with an increase in intracellular caspase activity. Fas therefore activates caspase-3 not only by inducing the cleavage of the caspase zymogen to its active subunits, but also by stimulating the denitrosylation of its active site thiol. Post-translationally, ubiquitinated by BIRC6; this activity is inhibited by DIABLO/SMAC.

It localises to the cytoplasm. The catalysed reaction is Strict requirement for an Asp residue at positions P1 and P4. It has a preferred cleavage sequence of Asp-Xaa-Xaa-Asp-|- with a hydrophobic amino-acid residue at P2 and a hydrophilic amino-acid residue at P3, although Val or Ala are also accepted at this position.. With respect to regulation, inhibited by BIRC6; following inhibition of BIRC6-caspase binding by DIABLO/SMAC, BIRC6 is subjected to caspase cleavage, leading to an increase in active caspases. Involved in the activation cascade of caspases responsible for apoptosis execution. At the onset of apoptosis, it proteolytically cleaves poly(ADP-ribose) polymerase PARP1 at a '216-Asp-|-Gly-217' bond. Cleaves and activates sterol regulatory element binding proteins (SREBPs) between the basic helix-loop-helix leucine zipper domain and the membrane attachment domain. Cleaves and activates caspase-6, -7 and -9 (CASP6, CASP7 and CASP9, respectively). Cleaves and inactivates interleukin-18 (IL18). Triggers cell adhesion in sympathetic neurons through RET cleavage. Cleaves IL-1 beta between an Asp and an Ala, releasing the mature cytokine which is involved in a variety of inflammatory processes. Cleaves and inhibits serine/threonine-protein kinase AKT1 in response to oxidative stress. Acts as an inhibitor of type I interferon production during virus-induced apoptosis by mediating cleavage of antiviral proteins CGAS, IRF3 and MAVS, thereby preventing cytokine overproduction. Also involved in pyroptosis by mediating cleavage and activation of gasdermin-E (GSDME). Cleaves XRCC4 and phospholipid scramblase proteins XKR4, XKR8 and XKR9, leading to promote phosphatidylserine exposure on apoptotic cell surface. Cleaves BIRC6 following inhibition of BIRC6-caspase binding by DIABLO/SMAC. In Felis catus (Cat), this protein is Caspase-3 (CASP3).